The following is a 131-amino-acid chain: DNA-directed RNA polymerase subunit Rpo8 (131 aa).

The protein belongs to the archaeal Rpo8 RNA polymerase subunit family. As to quaternary structure, part of the 13-subunit RNA polymerase complex. Interacts with Rpo1N on the periphery of the clamp head.

The protein resides in the cytoplasm. The enzyme catalyses RNA(n) + a ribonucleoside 5'-triphosphate = RNA(n+1) + diphosphate. DNA-dependent RNA polymerase (RNAP) catalyzes the transcription of DNA into RNA using the four ribonucleoside triphosphates as substrates. This is DNA-directed RNA polymerase subunit Rpo8 from Saccharolobus shibatae (strain ATCC 51178 / DSM 5389 / JCM 8931 / NBRC 15437 / B12) (Sulfolobus shibatae).